Reading from the N-terminus, the 229-residue chain is Adenine nucleotide translocase lysine N-methyltransferase (229 aa).

The N-terminal sequence (NTS) stretch occupies residues 1-22; it reads MDQDDPAEALTELREKRLGLLE. A helical membrane pass occupies residues 20-42; that stretch reads LLEIVQAAAGSGLAVYTIWALLL. The tract at residues 43–77 is methyltransferase (MTase); the sequence is QPGFRRVPLRLQVPYVGASARQVENVLSLLRGRPG. A pre-methyltransferase (preMT) region spans residues 43 to 77; sequence QPGFRRVPLRLQVPYVGASARQVENVLSLLRGRPG.

This sequence belongs to the ANT/ATPSC lysine N-methyltransferase family.

It is found in the mitochondrion membrane. The catalysed reaction is L-lysyl-[protein] + 3 S-adenosyl-L-methionine = N(6),N(6),N(6)-trimethyl-L-lysyl-[protein] + 3 S-adenosyl-L-homocysteine + 3 H(+). In terms of biological role, mitochondrial protein-lysine N-methyltransferase that trimethylates adenine nucleotide translocases ANT2/SLC25A5 and ANT3/SLC25A6, thereby regulating mitochondrial respiration. Probably also trimethylates ANT1/SLC25A4. The polypeptide is Adenine nucleotide translocase lysine N-methyltransferase (Mus musculus (Mouse)).